A 456-amino-acid chain; its full sequence is Alcohol acyltransferase 1 (456 aa).

Residues His-166 and Asp-382 each act as proton acceptor in the active site.

It belongs to the plant acyltransferase family. In terms of tissue distribution, expressed in fruit.

It catalyses the reaction 3-(methylsulfanyl)propanoyl-CoA + butan-1-ol = butyl 3-(methylsulfanyl)propanoate + CoA. The enzyme catalyses ethanol + benzoyl-CoA = ethyl benzoate + CoA. It carries out the reaction butan-1-ol + benzoyl-CoA = butyl benzoate + CoA. The catalysed reaction is 2-(methylsulfanyl)acetyl-CoA + butan-1-ol = butyl 2-(methylsulfanyl)acetate + CoA. Functionally, involved in the biosynthesis of volatile esters which confer kiwifruit flavor. Alcohol acyl transferase that can use a wide range of alcohols as substrate to produce esters. Exhibits benzoyl-CoA:alcohol O-acyltransferase activity. The polypeptide is Alcohol acyltransferase 1 (Actinidia deliciosa (Kiwi)).